Here is a 1575-residue protein sequence, read N- to C-terminus: Ras GTPase-activating-like protein IQGAP2 (1575 aa).

Residue S16 is modified to Phosphoserine. In terms of domain architecture, Calponin-homology (CH) spans 41–156 (LCHLEEAKRW…YCIHALSLYL (116 aa)). At T356 the chain carries Phosphothreonine. A WW domain is found at 594–627 (VSSDGSWLKLNLHKKYDYYYNTDSKESSWVTPES). Residues S595, S599, and S685 each carry the phosphoserine modification. IQ domains lie at 690–719 (QEEN…TFID), 720–749 (NTDS…YFRD), and 750–779 (HNNE…SENP). At T716 the chain carries Phosphothreonine. 4 positions are modified to phosphothreonine: T782, T881, T1002, and T1269. The 250-residue stretch at 933–1182 (YLLLKLFKTA…QEFRKYFKEA (250 aa)) folds into the Ras-GAP domain. 4 positions are modified to phosphoserine: S1271, S1279, S1358, and S1461.

Isoform 2 expression is enhanced in testis.

In terms of biological role, binds to activated CDC42 and RAC1 but does not seem to stimulate their GTPase activity. Associates with calmodulin. The chain is Ras GTPase-activating-like protein IQGAP2 (IQGAP2) from Homo sapiens (Human).